The following is a 148-amino-acid chain: MGRFIFVSFGLLVVFLSLSGTGAALNCASGWSGYDQHCYKVFDKPKSWADAEKFCKNSTNGSHLASIHSSEEEAFVVKLVSQTLESQILWMGLSKVWNQCDWGWSNGAKLKYKAWAEESYCVYFSSTKKGWRSRACRLLGHFVCKSPA.

An N-terminal signal peptide occupies residues 1–24; the sequence is MGRFIFVSFGLLVVFLSLSGTGAA. 3 disulfides stabilise this stretch: C27-C38, C55-C144, and C121-C136. Positions 34 to 145 constitute a C-type lectin domain; the sequence is YDQHCYKVFD…CRLLGHFVCK (112 aa). N-linked (GlcNAc...) asparagine glycans are attached at residues N57 and N60.

Belongs to the snaclec family. As to quaternary structure, heterodimer; disulfide-linked. In terms of tissue distribution, expressed by the venom gland.

The protein localises to the secreted. In terms of biological role, interferes with one step of hemostasis (modulation of platelet aggregation, or coagulation cascade, for example). This Macrovipera lebetinus (Levantine viper) protein is Snaclec B9.